The chain runs to 501 residues: Geissoschizine oxidase (501 aa).

A helical transmembrane segment spans residues 1–21; the sequence is MEFSFSSPALYIVYFLLFFVV. N-linked (GlcNAc...) asparagine glycosylation is present at N60. Residue C442 participates in heme binding.

The protein belongs to the cytochrome P450 family. The cofactor is heme. Expressed in leaf epidermis. Also present in the leaf internal phloem-associated parenchyma (IPAP) inside the mesophyll.

It is found in the membrane. It carries out the reaction (19E)-geissoschizine + reduced [NADPH--hemoprotein reductase] + O2 = akuammicine + formate + oxidized [NADPH--hemoprotein reductase] + H2O + H(+). The catalysed reaction is (19E)-geissoschizine + reduced [NADPH--hemoprotein reductase] + O2 = 3,17-didehydrostemmadenine + oxidized [NADPH--hemoprotein reductase] + 2 H2O. Its pathway is alkaloid biosynthesis. Its function is as follows. Component of the seco-iridoid and derivatives monoterpenoid indole alkaloids (MIAs, e.g. vincristine, quinine, and strychnine) biosynthesis pathway. Catalyzes the oxidation of 19E-geissoschizine to produce a short-lived MIA unstable intermediate which can be spontaneously converted into akuammicine or oxidized by Redox1 and Redox2 to produce stemmadenine and 16S/R-deshydroxymethylstemmadenine (16S/R-DHS). This Catharanthus roseus (Madagascar periwinkle) protein is Geissoschizine oxidase.